The primary structure comprises 215 residues: Cytochrome b6 (215 aa).

A helical transmembrane segment spans residues 32 to 52 (IFYCLGGITLTCFLVQVATGF). Cys35 serves as a coordination point for heme c. His86 and His100 together coordinate heme b. A run of 3 helical transmembrane segments spans residues 90–110 (ASMM…TGGF), 116–136 (LTWV…VTGY), and 186–206 (LHTF…FLMI). Heme b-binding residues include His187 and His202.

It belongs to the cytochrome b family. PetB subfamily. As to quaternary structure, the 4 large subunits of the cytochrome b6-f complex are cytochrome b6, subunit IV (17 kDa polypeptide, PetD), cytochrome f and the Rieske protein, while the 4 small subunits are PetG, PetL, PetM and PetN. The complex functions as a dimer. It depends on heme b as a cofactor. The cofactor is heme c.

The protein resides in the plastid. Its subcellular location is the chloroplast thylakoid membrane. Its function is as follows. Component of the cytochrome b6-f complex, which mediates electron transfer between photosystem II (PSII) and photosystem I (PSI), cyclic electron flow around PSI, and state transitions. The polypeptide is Cytochrome b6 (Citrus sinensis (Sweet orange)).